The chain runs to 440 residues: uncharacterized protein (440 aa).

Helical transmembrane passes span 1 to 21, 29 to 49, 70 to 90, 101 to 121, 179 to 199, 226 to 246, 258 to 278, 343 to 363, 366 to 386, and 389 to 409; these read MLLVNLAIFIAFLLLLAQLYR, TVFIGLLLGLLFGAVLQSAFE, LLQMIVMPLVFVSILSAIARI, VGVLSTLLITTAISAAIGIAM, TSIISVVIFSALLGVAALSLG, FVIRLTPYGVFALMIKMAATS, IVASYAAIALMFVVHGILLFF, IYPAMLAVMVAPMVGIDPFSF, ILTLIFVVAISSFGIAGVGGG, and FAAIVVLSTLGLPLELIGLLI.

Belongs to the dicarboxylate/amino acid:cation symporter (DAACS) (TC 2.A.23) family.

It is found in the cell membrane. This is an uncharacterized protein from Haemophilus influenzae (strain ATCC 51907 / DSM 11121 / KW20 / Rd).